The sequence spans 575 residues: Isocitrate dehydrogenase kinase/phosphatase (575 aa).

ATP-binding positions include Ala315–Met321 and Lys336. The active site involves Asp371.

The protein belongs to the AceK family.

It is found in the cytoplasm. It carries out the reaction L-seryl-[isocitrate dehydrogenase] + ATP = O-phospho-L-seryl-[isocitrate dehydrogenase] + ADP + H(+). In terms of biological role, bifunctional enzyme which can phosphorylate or dephosphorylate isocitrate dehydrogenase (IDH) on a specific serine residue. This is a regulatory mechanism which enables bacteria to bypass the Krebs cycle via the glyoxylate shunt in response to the source of carbon. When bacteria are grown on glucose, IDH is fully active and unphosphorylated, but when grown on acetate or ethanol, the activity of IDH declines drastically concomitant with its phosphorylation. The chain is Isocitrate dehydrogenase kinase/phosphatase from Yersinia pseudotuberculosis serotype O:1b (strain IP 31758).